The chain runs to 275 residues: Bifunctional protein FolD (275 aa).

Residues 161–163 (GRS), Ser-186, and Thr-227 contribute to the NADP(+) site.

This sequence belongs to the tetrahydrofolate dehydrogenase/cyclohydrolase family. Homodimer.

It carries out the reaction (6R)-5,10-methylene-5,6,7,8-tetrahydrofolate + NADP(+) = (6R)-5,10-methenyltetrahydrofolate + NADPH. The catalysed reaction is (6R)-5,10-methenyltetrahydrofolate + H2O = (6R)-10-formyltetrahydrofolate + H(+). It participates in one-carbon metabolism; tetrahydrofolate interconversion. In terms of biological role, catalyzes the oxidation of 5,10-methylenetetrahydrofolate to 5,10-methenyltetrahydrofolate and then the hydrolysis of 5,10-methenyltetrahydrofolate to 10-formyltetrahydrofolate. This chain is Bifunctional protein FolD, found in Parafrankia sp. (strain EAN1pec).